A 265-amino-acid chain; its full sequence is Hydroxyethylthiazole kinase (265 aa).

Met41 is a binding site for substrate. 2 residues coordinate ATP: Arg117 and Ser163. Gly190 provides a ligand contact to substrate.

The protein belongs to the Thz kinase family. Mg(2+) serves as cofactor.

It carries out the reaction 5-(2-hydroxyethyl)-4-methylthiazole + ATP = 4-methyl-5-(2-phosphooxyethyl)-thiazole + ADP + H(+). It functions in the pathway cofactor biosynthesis; thiamine diphosphate biosynthesis; 4-methyl-5-(2-phosphoethyl)-thiazole from 5-(2-hydroxyethyl)-4-methylthiazole: step 1/1. Its function is as follows. Catalyzes the phosphorylation of the hydroxyl group of 4-methyl-5-beta-hydroxyethylthiazole (THZ). This is Hydroxyethylthiazole kinase from Pediococcus pentosaceus (strain ATCC 25745 / CCUG 21536 / LMG 10740 / 183-1w).